The following is a 343-amino-acid chain: MAKRRLSKRQVDRIRERQSQRLDTSVAAPDGKQLGSEQAGLVIAHHGKQVQVETLDNSDDSPRRLRCHLRATLGSVVTGDRIVFQEDDSSGIIVAIQPRSSTLVRPDSYGKLKPVAANVDQLLITIACAPEPFSGLIDRYLAVAENLHIRPVLLFNKLDLLQSDEIDSAIANKVAKLRTLYTSLGYRCIDTCAKNGDGLDELRNTLQDNTSVFVGQSGVGKSSIIKKLLPDQEIAIGALSDAIDKGRHTTTHSELFHFPFGGDCIDSPGIREFGLWHLSPKEVTYGFIEIRDIAGLCKFRDCSHTHEPSCAVLNAVEDGSLHPERYENFQRIVQSLDDVNMQG.

The interval 1–32 is disordered; the sequence is MAKRRLSKRQVDRIRERQSQRLDTSVAAPDGK. The span at 9–20 shows a compositional bias: basic and acidic residues; the sequence is RQVDRIRERQSQ. The region spanning 109 to 273 is the CP-type G domain; sequence YGKLKPVAAN…CIDSPGIREF (165 aa). GTP contacts are provided by residues 156–159 and 215–223; these read NKLD and GQSGVGKSS. Residues Cys-297, Cys-302, His-304, and Cys-310 each contribute to the Zn(2+) site.

It belongs to the TRAFAC class YlqF/YawG GTPase family. RsgA subfamily. As to quaternary structure, monomer. Associates with 30S ribosomal subunit, binds 16S rRNA. The cofactor is Zn(2+).

It is found in the cytoplasm. In terms of biological role, one of several proteins that assist in the late maturation steps of the functional core of the 30S ribosomal subunit. Helps release RbfA from mature subunits. May play a role in the assembly of ribosomal proteins into the subunit. Circularly permuted GTPase that catalyzes slow GTP hydrolysis, GTPase activity is stimulated by the 30S ribosomal subunit. This is Small ribosomal subunit biogenesis GTPase RsgA from Saccharophagus degradans (strain 2-40 / ATCC 43961 / DSM 17024).